Consider the following 1026-residue polypeptide: Tyrosine-protein phosphatase 1 (1026 aa).

The FERM domain maps to I29–T315. Disordered stretches follow at residues S376 to S396, P430 to Q456, G489 to N515, and S584 to V616. The segment covering D446–Q456 has biased composition (polar residues). Over residues S600 to P609 the composition is skewed to low complexity. In terms of domain architecture, PDZ spans T617–A689. One can recognise a Tyrosine-protein phosphatase domain in the interval V753–A1011. Residues D920, C952–R958, and Q996 contribute to the substrate site. C952 (phosphocysteine intermediate) is an active-site residue.

This sequence belongs to the protein-tyrosine phosphatase family. Non-receptor class subfamily.

Its subcellular location is the cytoplasm. It localises to the cytoskeleton. It catalyses the reaction O-phospho-L-tyrosyl-[protein] + H2O = L-tyrosyl-[protein] + phosphate. The sequence is that of Tyrosine-protein phosphatase 1 (ptp-1) from Caenorhabditis elegans.